A 601-amino-acid polypeptide reads, in one-letter code: ATP-dependent RNA helicase DeaD (601 aa).

Residues 6-34 (STFSFLGLNPFIIQSLNEMGYVKPSPIQA) carry the Q motif motif. In terms of domain architecture, Helicase ATP-binding spans 37–208 (IPLLLEGRDV…KRFMRNPKEI (172 aa)). Residue 50 to 57 (AQTGSGKT) participates in ATP binding. The DEAD box motif lies at 156-159 (DEAD). The Helicase C-terminal domain maps to 231–378 (KTDALIRFLE…EVQLPKVELL (148 aa)). The span at 552 to 576 (SRHYENKTTHRSIFNKDKNSNRRVS) shows a compositional bias: basic and acidic residues. Positions 552 to 601 (SRHYENKTTHRSIFNKDKNSNRRVSDGSFNKSNSPKKTEFKSSFFRRRNV) are disordered.

This sequence belongs to the DEAD box helicase family. DeaD/CsdA subfamily.

It localises to the cytoplasm. It catalyses the reaction ATP + H2O = ADP + phosphate + H(+). Functionally, DEAD-box RNA helicase involved in various cellular processes at low temperature, including ribosome biogenesis, mRNA degradation and translation initiation. This Buchnera aphidicola subsp. Acyrthosiphon pisum (strain APS) (Acyrthosiphon pisum symbiotic bacterium) protein is ATP-dependent RNA helicase DeaD.